The sequence spans 158 residues: SsrA-binding protein (158 aa).

Belongs to the SmpB family.

It is found in the cytoplasm. Its function is as follows. Required for rescue of stalled ribosomes mediated by trans-translation. Binds to transfer-messenger RNA (tmRNA), required for stable association of tmRNA with ribosomes. tmRNA and SmpB together mimic tRNA shape, replacing the anticodon stem-loop with SmpB. tmRNA is encoded by the ssrA gene; the 2 termini fold to resemble tRNA(Ala) and it encodes a 'tag peptide', a short internal open reading frame. During trans-translation Ala-aminoacylated tmRNA acts like a tRNA, entering the A-site of stalled ribosomes, displacing the stalled mRNA. The ribosome then switches to translate the ORF on the tmRNA; the nascent peptide is terminated with the 'tag peptide' encoded by the tmRNA and targeted for degradation. The ribosome is freed to recommence translation, which seems to be the essential function of trans-translation. The chain is SsrA-binding protein from Buchnera aphidicola subsp. Baizongia pistaciae (strain Bp).